We begin with the raw amino-acid sequence, 269 residues long: Formamidopyrimidine-DNA glycosylase (269 aa).

The Schiff-base intermediate with DNA role is filled by Pro-2. Glu-3 serves as the catalytic Proton donor. Lys-57 functions as the Proton donor; for beta-elimination activity in the catalytic mechanism. 3 residues coordinate DNA: His-90, Arg-109, and Lys-150. The segment at 235–269 (QVYGRKGEPCRVCGTPIVATKHAQRATFYCRQCQK) adopts an FPG-type zinc-finger fold. Residue Arg-259 is the Proton donor; for delta-elimination activity of the active site.

It belongs to the FPG family. As to quaternary structure, monomer. The cofactor is Zn(2+).

It carries out the reaction Hydrolysis of DNA containing ring-opened 7-methylguanine residues, releasing 2,6-diamino-4-hydroxy-5-(N-methyl)formamidopyrimidine.. It catalyses the reaction 2'-deoxyribonucleotide-(2'-deoxyribose 5'-phosphate)-2'-deoxyribonucleotide-DNA = a 3'-end 2'-deoxyribonucleotide-(2,3-dehydro-2,3-deoxyribose 5'-phosphate)-DNA + a 5'-end 5'-phospho-2'-deoxyribonucleoside-DNA + H(+). Involved in base excision repair of DNA damaged by oxidation or by mutagenic agents. Acts as a DNA glycosylase that recognizes and removes damaged bases. Has a preference for oxidized purines, such as 7,8-dihydro-8-oxoguanine (8-oxoG). Has AP (apurinic/apyrimidinic) lyase activity and introduces nicks in the DNA strand. Cleaves the DNA backbone by beta-delta elimination to generate a single-strand break at the site of the removed base with both 3'- and 5'-phosphates. The polypeptide is Formamidopyrimidine-DNA glycosylase (Escherichia coli (strain 55989 / EAEC)).